Reading from the N-terminus, the 197-residue chain is ATP-dependent Clp protease proteolytic subunit (197 aa).

The active-site Nucleophile is the S100. The active site involves H125.

Belongs to the peptidase S14 family. In terms of assembly, component of the chloroplastic Clp protease core complex.

The protein resides in the plastid. It localises to the chloroplast stroma. The enzyme catalyses Hydrolysis of proteins to small peptides in the presence of ATP and magnesium. alpha-casein is the usual test substrate. In the absence of ATP, only oligopeptides shorter than five residues are hydrolyzed (such as succinyl-Leu-Tyr-|-NHMec, and Leu-Tyr-Leu-|-Tyr-Trp, in which cleavage of the -Tyr-|-Leu- and -Tyr-|-Trp bonds also occurs).. In terms of biological role, cleaves peptides in various proteins in a process that requires ATP hydrolysis. Has a chymotrypsin-like activity. Plays a major role in the degradation of misfolded proteins. In Angiopteris evecta (Mule's foot fern), this protein is ATP-dependent Clp protease proteolytic subunit.